Consider the following 154-residue polypeptide: Transcription antitermination protein NusB (154 aa).

It belongs to the NusB family.

Functionally, involved in transcription antitermination. Required for transcription of ribosomal RNA (rRNA) genes. Binds specifically to the boxA antiterminator sequence of the ribosomal RNA (rrn) operons. The sequence is that of Transcription antitermination protein NusB from Bordetella parapertussis (strain 12822 / ATCC BAA-587 / NCTC 13253).